Consider the following 491-residue polypeptide: Aspartyl/glutamyl-tRNA(Asn/Gln) amidotransferase subunit B (491 aa).

Belongs to the GatB/GatE family. GatB subfamily. Heterotrimer of A, B and C subunits.

It catalyses the reaction L-glutamyl-tRNA(Gln) + L-glutamine + ATP + H2O = L-glutaminyl-tRNA(Gln) + L-glutamate + ADP + phosphate + H(+). The catalysed reaction is L-aspartyl-tRNA(Asn) + L-glutamine + ATP + H2O = L-asparaginyl-tRNA(Asn) + L-glutamate + ADP + phosphate + 2 H(+). Functionally, allows the formation of correctly charged Asn-tRNA(Asn) or Gln-tRNA(Gln) through the transamidation of misacylated Asp-tRNA(Asn) or Glu-tRNA(Gln) in organisms which lack either or both of asparaginyl-tRNA or glutaminyl-tRNA synthetases. The reaction takes place in the presence of glutamine and ATP through an activated phospho-Asp-tRNA(Asn) or phospho-Glu-tRNA(Gln). The protein is Aspartyl/glutamyl-tRNA(Asn/Gln) amidotransferase subunit B of Nostoc punctiforme (strain ATCC 29133 / PCC 73102).